Reading from the N-terminus, the 366-residue chain is tRNA/tmRNA (uracil-C(5))-methyltransferase (366 aa).

5 residues coordinate S-adenosyl-L-methionine: Q190, Y218, N223, E239, and D299. C324 acts as the Nucleophile in catalysis. Residue E358 is the Proton acceptor of the active site.

Belongs to the class I-like SAM-binding methyltransferase superfamily. RNA M5U methyltransferase family. TrmA subfamily.

The catalysed reaction is uridine(54) in tRNA + S-adenosyl-L-methionine = 5-methyluridine(54) in tRNA + S-adenosyl-L-homocysteine + H(+). The enzyme catalyses uridine(341) in tmRNA + S-adenosyl-L-methionine = 5-methyluridine(341) in tmRNA + S-adenosyl-L-homocysteine + H(+). In terms of biological role, dual-specificity methyltransferase that catalyzes the formation of 5-methyluridine at position 54 (m5U54) in all tRNAs, and that of position 341 (m5U341) in tmRNA (transfer-mRNA). In Escherichia coli O6:H1 (strain CFT073 / ATCC 700928 / UPEC), this protein is tRNA/tmRNA (uracil-C(5))-methyltransferase.